A 274-amino-acid polypeptide reads, in one-letter code: 3',5'-cyclic adenosine monophosphate phosphodiesterase CpdA (274 aa).

Fe cation contacts are provided by Asp21, His23, Asp63, Asn93, His163, His202, and His204. Residues His23, Asp63, and 93–94 (NH) each bind AMP. His204 contacts AMP.

This sequence belongs to the cyclic nucleotide phosphodiesterase class-III family. It depends on Fe(2+) as a cofactor.

It carries out the reaction 3',5'-cyclic AMP + H2O = AMP + H(+). In terms of biological role, hydrolyzes cAMP to 5'-AMP. Plays an important regulatory role in modulating the intracellular concentration of cAMP, thereby influencing cAMP-dependent processes. May coordinate responses to nutritional stress, ensuring optimal competence development. The polypeptide is 3',5'-cyclic adenosine monophosphate phosphodiesterase CpdA (Haemophilus influenzae (strain ATCC 51907 / DSM 11121 / KW20 / Rd)).